The following is a 124-amino-acid chain: Protein MGF 110-4L (124 aa).

The N-terminal stretch at 1–28 (MLVIFLGILGLLANQVLGLPTQAGGHLR) is a signal peptide. N64 is a glycosylation site (N-linked (GlcNAc...) asparagine; by host). The Prevents secretion from ER motif lies at 121–124 (KEDL).

It belongs to the asfivirus MGF 110 family.

It is found in the virion. The protein resides in the host endoplasmic reticulum-Golgi intermediate compartment. Functionally, causes the redistribution of lumenal ER protein to an enlarged ERGIC compartment. The protein is Protein MGF 110-4L of African swine fever virus (strain Badajoz 1971 Vero-adapted) (Ba71V).